We begin with the raw amino-acid sequence, 374 residues long: Alanine racemase (374 aa).

Residue lysine 40 is the Proton acceptor; specific for D-alanine of the active site. Lysine 40 bears the N6-(pyridoxal phosphate)lysine mark. Residue arginine 136 participates in substrate binding. Residue tyrosine 264 is the Proton acceptor; specific for L-alanine of the active site. Residue methionine 311 coordinates substrate.

This sequence belongs to the alanine racemase family. The cofactor is pyridoxal 5'-phosphate.

It carries out the reaction L-alanine = D-alanine. It functions in the pathway amino-acid biosynthesis; D-alanine biosynthesis; D-alanine from L-alanine: step 1/1. In terms of biological role, catalyzes the interconversion of L-alanine and D-alanine. May also act on other amino acids. The chain is Alanine racemase (alr) from Pediococcus pentosaceus (strain ATCC 25745 / CCUG 21536 / LMG 10740 / 183-1w).